We begin with the raw amino-acid sequence, 243 residues long: MTAAIEKQALLYTGKAKAMYATNDPEILWVEYLDQATALNGKRKVPIDQKGRLNNRIASLIFKDLANHGIANHFIEQPSDYVQLVRRVTMIPLETVVRNAASGSFERKFAVPHLTKFAEPVLEFFYKSDQLDDPFINDSQIHALNVATPAIVAEIKRQALQVNQRLTAIFAAMGVQLVDFKIEFGLTTTGKVLLADEISPDSCRLVDLKTGASLDKDVFRKDLGDLTSVYQEVLTRLATVEEA.

This sequence belongs to the SAICAR synthetase family.

It carries out the reaction 5-amino-1-(5-phospho-D-ribosyl)imidazole-4-carboxylate + L-aspartate + ATP = (2S)-2-[5-amino-1-(5-phospho-beta-D-ribosyl)imidazole-4-carboxamido]succinate + ADP + phosphate + 2 H(+). Its pathway is purine metabolism; IMP biosynthesis via de novo pathway; 5-amino-1-(5-phospho-D-ribosyl)imidazole-4-carboxamide from 5-amino-1-(5-phospho-D-ribosyl)imidazole-4-carboxylate: step 1/2. The polypeptide is Phosphoribosylaminoimidazole-succinocarboxamide synthase (Lactiplantibacillus plantarum (strain ATCC BAA-793 / NCIMB 8826 / WCFS1) (Lactobacillus plantarum)).